Reading from the N-terminus, the 137-residue chain is Nucleoside diphosphate kinase (137 aa).

6 residues coordinate ATP: lysine 9, phenylalanine 57, arginine 85, threonine 91, arginine 102, and asparagine 112. The active-site Pros-phosphohistidine intermediate is histidine 115.

Belongs to the NDK family. As to quaternary structure, homotetramer. Mg(2+) serves as cofactor.

Its subcellular location is the cytoplasm. It carries out the reaction a 2'-deoxyribonucleoside 5'-diphosphate + ATP = a 2'-deoxyribonucleoside 5'-triphosphate + ADP. The enzyme catalyses a ribonucleoside 5'-diphosphate + ATP = a ribonucleoside 5'-triphosphate + ADP. Major role in the synthesis of nucleoside triphosphates other than ATP. The ATP gamma phosphate is transferred to the NDP beta phosphate via a ping-pong mechanism, using a phosphorylated active-site intermediate. The chain is Nucleoside diphosphate kinase from Campylobacter curvus (strain 525.92).